The sequence spans 178 residues: Deoxycytidylate deaminase (178 aa).

The 133-residue stretch at 14–146 (EWPEYFMAVA…EATAARLLFD (133 aa)) folds into the CMP/dCMP-type deaminase domain. H84 contacts Zn(2+). The active-site Proton donor is the E86. Residues C110 and C113 each coordinate Zn(2+). S174 carries the phosphoserine modification.

This sequence belongs to the cytidine and deoxycytidylate deaminase family. As to quaternary structure, homohexamer. Zn(2+) serves as cofactor.

The enzyme catalyses dCMP + H2O + H(+) = dUMP + NH4(+). The catalysed reaction is 5-hydroxymethyl-dCMP + H2O + H(+) = 5-hydroxymethyl-dUMP + NH4(+). Its activity is regulated as follows. Allosteric enzyme whose activity is greatly influenced by the end products of its metabolic pathway, dCTP and dTTP. In terms of biological role, catalyzes the deamination of dCMP to dUMP, providing the nucleoside monophosphate substrate for the thymidylate synthase/TYMS. Also, part of a nucleotide salvage pathway that eliminates epigenetically modified 5-hydroxymethyl-dCMP (hmdCMP) in a two-step process entailing deamination to cytotoxic 5-hydroxymethyl-dUMP (hmdUMP), followed by its hydrolysis into 5-hydroxymethyluracil (hmU) and 2-deoxy-D-ribose 5-phosphate (deoxyribosephosphate). Catalyzes the first step in that pathway, the deamination of 5-hydroxymethyl-dCMP (hmdCMP). This chain is Deoxycytidylate deaminase, found in Pongo abelii (Sumatran orangutan).